A 483-amino-acid chain; its full sequence is Acyl-coenzyme A thioesterase 2, mitochondrial (483 aa).

Lys104 bears the N6-acetyllysine mark. Catalysis depends on charge relay system residues Ser294, Asp388, and His422. Lys470 is subject to N6-succinyllysine. The Microbody targeting signal motif lies at 481 to 483 (SKV).

This sequence belongs to the C/M/P thioester hydrolase family. Monomer. In terms of tissue distribution, strongest expression in heart, liver, muscle and kidney. Weak in placenta and pancreas.

The protein localises to the mitochondrion. It catalyses the reaction hexadecanoyl-CoA + H2O = hexadecanoate + CoA + H(+). It carries out the reaction tetradecanoyl-CoA + H2O = tetradecanoate + CoA + H(+). The catalysed reaction is octadecanoyl-CoA + H2O = octadecanoate + CoA + H(+). The enzyme catalyses eicosanoyl-CoA + H2O = eicosanoate + CoA + H(+). It catalyses the reaction decanoyl-CoA + H2O = decanoate + CoA + H(+). It carries out the reaction dodecanoyl-CoA + H2O = dodecanoate + CoA + H(+). The catalysed reaction is (9Z)-octadecenoyl-CoA + H2O = (9Z)-octadecenoate + CoA + H(+). The enzyme catalyses (9Z)-hexadecenoyl-CoA + H2O = (9Z)-hexadecenoate + CoA + H(+). It catalyses the reaction (9E)-octadecenoyl-CoA + H2O = (9E)-octadecenoate + CoA + H(+). It carries out the reaction (9Z,12Z)-octadecadienoyl-CoA + H2O = (9Z,12Z)-octadecadienoate + CoA + H(+). The protein operates within lipid metabolism; fatty acid metabolism. In terms of biological role, catalyzes the hydrolysis of acyl-CoAs into free fatty acids and coenzyme A (CoASH), regulating their respective intracellular levels. Displays higher activity toward long chain acyl CoAs (C14-C20). The enzyme is involved in enhancing the hepatic fatty acid oxidation in mitochondria. This chain is Acyl-coenzyme A thioesterase 2, mitochondrial (ACOT2), found in Homo sapiens (Human).